A 113-amino-acid chain; its full sequence is UPF0122 protein PEPE_0845 (113 aa).

This sequence belongs to the UPF0122 family.

Its function is as follows. Might take part in the signal recognition particle (SRP) pathway. This is inferred from the conservation of its genetic proximity to ftsY/ffh. May be a regulatory protein. The protein is UPF0122 protein PEPE_0845 of Pediococcus pentosaceus (strain ATCC 25745 / CCUG 21536 / LMG 10740 / 183-1w).